Reading from the N-terminus, the 179-residue chain is MARLKDYYQNEVVAKLKSELNLDNIMEVPAIKKITLNMGVGDAAKDKKIMTFALNDLTAIAGQKPVVTMSKKSIAGFKIRDGWPIGAKVTLRGERMYEFLDRLITIAIPRIRDFRGLSAKSFDGRGNYSLGMKEQISFPEIDYDKIDSIRGLDISITTTAKNDDQGRALLKAFGFPFKS.

It belongs to the universal ribosomal protein uL5 family. As to quaternary structure, part of the 50S ribosomal subunit; part of the 5S rRNA/L5/L18/L25 subcomplex. Contacts the 5S rRNA and the P site tRNA. Forms a bridge to the 30S subunit in the 70S ribosome.

In terms of biological role, this is one of the proteins that bind and probably mediate the attachment of the 5S RNA into the large ribosomal subunit, where it forms part of the central protuberance. In the 70S ribosome it contacts protein S13 of the 30S subunit (bridge B1b), connecting the 2 subunits; this bridge is implicated in subunit movement. Contacts the P site tRNA; the 5S rRNA and some of its associated proteins might help stabilize positioning of ribosome-bound tRNAs. The sequence is that of Large ribosomal subunit protein uL5 from Francisella philomiragia subsp. philomiragia (strain ATCC 25017 / CCUG 19701 / FSC 153 / O#319-036).